The chain runs to 125 residues: Lectin (125 aa).

Residues M1–E120 form the C-type lectin domain. 2 cysteine pairs are disulfide-bonded: C21–C119 and C96–C111.

As to quaternary structure, homodimer.

In terms of biological role, role in the defense system of the organism against microorganisms. This calcium-binding lectin binds galactose. This chain is Lectin, found in Polyandrocarpa misakiensis (Tunicate).